The chain runs to 754 residues: Protein neuralized (754 aa).

An NHR 1 domain is found at 106 to 260 (PLQFHSVHGD…NCTGIEFLDS (155 aa)). Positions 280-297 (QQQQMPQPAANASSALNS) are enriched in low complexity. Residues 280 to 308 (QQQQMPQPAANASSALNSHHPHQQSRRSL) are disordered. A phosphoserine mark is found at Ser-338 and Ser-341. The 156-residue stretch at 368–523 (PVPFHNTKGR…STQSLRMFRQ (156 aa)) folds into the NHR 2 domain. An RING-type zinc finger spans residues 701 to 742 (CTICYENPIDSVLYMCGHMCMCYDCAIEQWRGVGGGQCPLCR).

It is found in the nucleus. Its function is as follows. Involved in neurogenesis. Interacts with other neurogenic proteins in the specification of the neuroblast versus epidermoblast cell fate. The sequence is that of Protein neuralized (neur) from Drosophila melanogaster (Fruit fly).